A 437-amino-acid chain; its full sequence is Methylenetetrahydrofolate--tRNA-(uracil-5-)-methyltransferase TrmFO (437 aa).

10–15 (GAGLAG) contributes to the FAD binding site.

The protein belongs to the MnmG family. TrmFO subfamily. Requires FAD as cofactor.

It localises to the cytoplasm. It catalyses the reaction uridine(54) in tRNA + (6R)-5,10-methylene-5,6,7,8-tetrahydrofolate + NADH + H(+) = 5-methyluridine(54) in tRNA + (6S)-5,6,7,8-tetrahydrofolate + NAD(+). The enzyme catalyses uridine(54) in tRNA + (6R)-5,10-methylene-5,6,7,8-tetrahydrofolate + NADPH + H(+) = 5-methyluridine(54) in tRNA + (6S)-5,6,7,8-tetrahydrofolate + NADP(+). Catalyzes the folate-dependent formation of 5-methyl-uridine at position 54 (M-5-U54) in all tRNAs. This chain is Methylenetetrahydrofolate--tRNA-(uracil-5-)-methyltransferase TrmFO, found in Brevibacillus brevis (strain 47 / JCM 6285 / NBRC 100599).